The following is a 150-amino-acid chain: Large ribosomal subunit protein bL9 (150 aa).

Belongs to the bacterial ribosomal protein bL9 family.

Binds to the 23S rRNA. This is Large ribosomal subunit protein bL9 from Shewanella piezotolerans (strain WP3 / JCM 13877).